A 304-amino-acid chain; its full sequence is Ribosomal RNA small subunit methyltransferase H (304 aa).

S-adenosyl-L-methionine-binding positions include 47 to 49, D66, F93, D108, and Q115; that span reads GGH.

This sequence belongs to the methyltransferase superfamily. RsmH family.

The protein localises to the cytoplasm. The catalysed reaction is cytidine(1402) in 16S rRNA + S-adenosyl-L-methionine = N(4)-methylcytidine(1402) in 16S rRNA + S-adenosyl-L-homocysteine + H(+). Specifically methylates the N4 position of cytidine in position 1402 (C1402) of 16S rRNA. The polypeptide is Ribosomal RNA small subunit methyltransferase H (Prochlorococcus marinus (strain NATL1A)).